A 352-amino-acid chain; its full sequence is tRNA pseudouridine synthase D (352 aa).

Asp81 serves as the catalytic Nucleophile. The 147-residue stretch at 157-303 (GVPNYFGTQR…MDHERRILRL (147 aa)) folds into the TRUD domain.

Belongs to the pseudouridine synthase TruD family.

It catalyses the reaction uridine(13) in tRNA = pseudouridine(13) in tRNA. Responsible for synthesis of pseudouridine from uracil-13 in transfer RNAs. This is tRNA pseudouridine synthase D from Pseudomonas putida (strain GB-1).